The chain runs to 142 residues: MRIINAEGLILGRLASKVAKMLLEGEEVVIVNAEKAIITGNREDIFAKYKQRTELRTRTNPRRGPFYPKRSDEIVRRTVRGMLPWKTDRGRKAFKRLKVYVGVPKEFEGKEFETISEAHMSRLATPKYVTVGEVAKFLGGKF.

Belongs to the universal ribosomal protein uL13 family. In terms of assembly, part of the 50S ribosomal subunit.

Its function is as follows. This protein is one of the early assembly proteins of the 50S ribosomal subunit, although it is not seen to bind rRNA by itself. It is important during the early stages of 50S assembly. The protein is Large ribosomal subunit protein uL13 of Thermococcus kodakarensis (strain ATCC BAA-918 / JCM 12380 / KOD1) (Pyrococcus kodakaraensis (strain KOD1)).